The following is a 194-amino-acid chain: Large ribosomal subunit protein eL15 (194 aa).

A disordered region spans residues 161 to 194; the sequence is GLTSAGKKGRGLMYKGKGAEKARPSVRANGKKTK.

The protein belongs to the eukaryotic ribosomal protein eL15 family.

This is Large ribosomal subunit protein eL15 from Methanococcus maripaludis (strain C5 / ATCC BAA-1333).